A 607-amino-acid chain; its full sequence is Large ribosomal subunit assembly factor BipA (607 aa).

In terms of domain architecture, tr-type G spans 3-198 (ENLRNIAIIA…AIVDHVPAPD (196 aa)). GTP-binding positions include 15-20 (DHGKTT) and 128-131 (NKVD). Positions 481–607 (GQRQNGVLIS…RRANRGQKEE (127 aa)) are C-terminal domain (CTD), required but not sufficient to bind 70S or 30S ribosomes.

The protein belongs to the TRAFAC class translation factor GTPase superfamily. Classic translation factor GTPase family. BipA subfamily. As to quaternary structure, monomer.

It is found in the cytoplasm. The enzyme catalyses GTP + H2O = GDP + phosphate + H(+). With respect to regulation, ribosome-associated GTPase is not affected by low levels of ppGpp, &gt;40 uM ppGpp and &gt;50 uM GDP inhibit GTPase. The C-terminus (residues 387-607 or 481-607) inhibits GTPase activity, in its absence kcat increases, but GTPase is no longer stimulated by 70S ribosome or 30S or 50S subunits. A 50S ribosomal subunit assembly protein with GTPase activity, required for 50S subunit assembly at low temperatures, may also play a role in translation. Binds GTP and analogs. Binds the 70S ribosome between the 30S and 50S subunits, in a similar position as ribosome-bound EF-G; it contacts a number of ribosomal proteins, both rRNAs and the A-site tRNA. A ribosome-stimulated GTPase, GTPase activity increases 4 fold in the presence of 70S ribosomes. Binds 70S ribosomes in the presence of GTP or its non-hydrolyzable analog GMPPNP; in the presence of ppGpp or under stress conditions it binds to 30S ribosomal subunits. The chain is Large ribosomal subunit assembly factor BipA from Salmonella typhimurium (strain LT2 / SGSC1412 / ATCC 700720).